A 594-amino-acid polypeptide reads, in one-letter code: Putative 3,4-dihydroxy-2-butanone kinase (594 aa).

Positions 11 to 341 (DPNDVVTEFI…LDAPTKAPNW (331 aa)) constitute a DhaK domain. Substrate is bound by residues 62–65 (GSGH), Lys-113, and Asp-118. His-226 functions as the Tele-hemiaminal-histidine intermediate in the catalytic mechanism. Positions 339–358 (PNWPVGAEGNRPPAKIPVPL) are disordered. The 205-residue stretch at 381–585 (HILETAIEAA…AAAWYRAAAL (205 aa)) folds into the DhaL domain. ATP-binding positions include 410–413 (DGDC), 455–456 (TS), Gly-499, 507–508 (TL), and 570–572 (DPG).

It belongs to the dihydroxyacetone kinase (DAK) family.

The protein is Putative 3,4-dihydroxy-2-butanone kinase (DHBK) of Solanum lycopersicum (Tomato).